Consider the following 188-residue polypeptide: Inner kinetochore subunit cnl2 (188 aa).

Belongs to the NKP2 family. As to quaternary structure, component of the inner kinetochore constitutive centromere-associated network (CCAN) (also known as central kinetochore Sim4 complex in fission yeast), which is composed of at least cnl2, cnp3, cnp20, fta1, fta2, fta3, fta4, fta6, fta7, mal2, mhf1, mhf2, mis6, mis15, mis17, sim4 and wip1.

The protein resides in the cytoplasm. It is found in the nucleus. The protein localises to the chromosome. It localises to the centromere. Its subcellular location is the kinetochore. Component of the kinetochore, a multiprotein complex that assembles on centromeric DNA and attaches chromosomes to spindle microtubules, mediating chromosome segregation and sister chromatid segregation during meiosis and mitosis. Component of the inner kinetochore constitutive centromere-associated network (CCAN), which serves as a structural platform for outer kinetochore assembly. This Schizosaccharomyces pombe (strain 972 / ATCC 24843) (Fission yeast) protein is Inner kinetochore subunit cnl2 (cnl2).